A 367-amino-acid polypeptide reads, in one-letter code: Flagellar P-ring protein (367 aa).

The signal sequence occupies residues 1–22; that stretch reads MRRMLVIRWILAIHLIATQVFA.

It belongs to the FlgI family. As to quaternary structure, the basal body constitutes a major portion of the flagellar organelle and consists of four rings (L,P,S, and M) mounted on a central rod.

Its subcellular location is the periplasm. It is found in the bacterial flagellum basal body. Its function is as follows. Assembles around the rod to form the L-ring and probably protects the motor/basal body from shearing forces during rotation. This is Flagellar P-ring protein from Legionella pneumophila (strain Lens).